Here is a 73-residue protein sequence, read N- to C-terminus: Venom peptide La1 (73 aa).

Position 73 is a lysine amide (Lys73).

This sequence belongs to the scorpion La1-like peptide family. Contains 4 disulfide bonds. Expressed by the venom gland.

The protein localises to the secreted. In terms of biological role, not toxic to insect. In Liocheles australasiae (Dwarf wood scorpion), this protein is Venom peptide La1.